Consider the following 247-residue polypeptide: MKAVILIPARLDSSRLEKKMLADLQGEPLIVRTWRQALKSRLADRVVVATDNDEIASVLQAYGAEVVMTSPHARCGTERIAEAAKSIEGDIYVNLQGDEPLISPENIDLALEPFFTETPPDCSTLVFPLLPEDFRQLEDINTVKVVMDNAGYALYFSRSPIPYQRQISTSTECYRHIGLYAFRADVLHAFASLAPSMLELAESLEQLRLLENGYRIRCVKTTRDAPGVNTYEDLELVRQLLRNAPVQ.

Belongs to the KdsB family.

Its subcellular location is the cytoplasm. It carries out the reaction 3-deoxy-alpha-D-manno-oct-2-ulosonate + CTP = CMP-3-deoxy-beta-D-manno-octulosonate + diphosphate. The protein operates within nucleotide-sugar biosynthesis; CMP-3-deoxy-D-manno-octulosonate biosynthesis; CMP-3-deoxy-D-manno-octulosonate from 3-deoxy-D-manno-octulosonate and CTP: step 1/1. It participates in bacterial outer membrane biogenesis; lipopolysaccharide biosynthesis. In terms of biological role, activates KDO (a required 8-carbon sugar) for incorporation into bacterial lipopolysaccharide in Gram-negative bacteria. The sequence is that of 3-deoxy-manno-octulosonate cytidylyltransferase from Chlorobium phaeobacteroides (strain DSM 266 / SMG 266 / 2430).